Reading from the N-terminus, the 312-residue chain is Protoheme IX farnesyltransferase (312 aa).

The next 8 helical transmembrane spans lie at 34–54 (LVIF…HPVL), 56–76 (ITSL…NMAL), 119–139 (ILVN…YVVI), 152–172 (IVIG…AATG), 179–199 (LLLF…LALF), 225–245 (ILLY…LGYF), 248–268 (VYGV…IEVF), and 283–303 (LFAF…LEAV).

It belongs to the UbiA prenyltransferase family. Protoheme IX farnesyltransferase subfamily.

Its subcellular location is the cell inner membrane. It carries out the reaction heme b + (2E,6E)-farnesyl diphosphate + H2O = Fe(II)-heme o + diphosphate. It functions in the pathway porphyrin-containing compound metabolism; heme O biosynthesis; heme O from protoheme: step 1/1. Its function is as follows. Converts heme B (protoheme IX) to heme O by substitution of the vinyl group on carbon 2 of heme B porphyrin ring with a hydroxyethyl farnesyl side group. This is Protoheme IX farnesyltransferase from Bradyrhizobium sp. (strain BTAi1 / ATCC BAA-1182).